The primary structure comprises 301 residues: UDP-N-acetylenolpyruvoylglucosamine reductase 1 (301 aa).

Positions 29–196 (KIGGPADILI…LEAEFQLQIG (168 aa)) constitute an FAD-binding PCMH-type domain. Arg174 is a catalytic residue. Ser225 serves as the catalytic Proton donor. Residue Glu295 is part of the active site.

The protein belongs to the MurB family. FAD serves as cofactor.

The protein localises to the cytoplasm. It catalyses the reaction UDP-N-acetyl-alpha-D-muramate + NADP(+) = UDP-N-acetyl-3-O-(1-carboxyvinyl)-alpha-D-glucosamine + NADPH + H(+). It functions in the pathway cell wall biogenesis; peptidoglycan biosynthesis. In terms of biological role, cell wall formation. The chain is UDP-N-acetylenolpyruvoylglucosamine reductase 1 from Bacillus cereus (strain ZK / E33L).